The following is a 629-amino-acid chain: Pescadillo homolog (629 aa).

Positions 321–414 (RLRTLFKGLK…QLLPTNKYFI (94 aa)) constitute a BRCT domain. 3 disordered regions span residues 439–470 (KALLDPSLIETHAQSDEDSEDEAEKEEEETVD), 488–568 (EYKK…MVKP), and 598–629 (IEASEKEARKTAKREARKEAAAAAAKASKLGK). Phosphoserine is present on residues Ser453 and Ser457. 2 stretches are compositionally biased toward acidic residues: residues 454 to 470 (DEDSEDEAEKEEEETVD) and 498 to 523 (VNEDEEDPEDDDEDDDEEEAEEEELD). The span at 524–535 (EKSKRLQEEKQK) shows a compositional bias: basic and acidic residues. Residues 542 to 551 (KVHKVNKRQV) show a composition bias toward basic residues. Basic and acidic residues-rich tracts occupy residues 552 to 561 (HKAEVDEHRL) and 598 to 617 (IEASEKEARKTAKREARKEA). Residues 584-627 (KEKEEWLLRKKRRTIEASEKEARKTAKREARKEAAAAAAKASKL) adopt a coiled-coil conformation. The span at 618–629 (AAAAAKASKLGK) shows a compositional bias: low complexity.

The protein belongs to the pescadillo family.

Its subcellular location is the nucleus. It is found in the nucleolus. It localises to the nucleoplasm. Required for maturation of ribosomal RNAs and formation of the large ribosomal subunit. The chain is Pescadillo homolog from Drosophila erecta (Fruit fly).